Reading from the N-terminus, the 31-residue chain is Sarcolipin (31 aa).

At 1–7 the chain is on the cytoplasmic side; it reads MGINTRE. A helical transmembrane segment spans residues 8–26; the sequence is LFLNFTIVLITVILMWLLV. The Lumenal segment spans residues 27-31; it reads RSYQY.

It belongs to the sarcolipin family. In terms of assembly, homooligomer. Can also form heterooligomers with other sarcoplasmic/endoplasmic reticulum calcium ATPase (SERCA) regulators ARLN, ERLN, PLN and STRIT1/DWORF. Monomer. Interacts with calcium ATPase ATP2A1/SERCA1. Interacts as a monomer with ATP2A2/SERCA2; the interaction decreases ATP2A2 Ca(2+) affinity. Interacts with VMP1; VMP1 competes with PLN and SLN to prevent them from forming an inhibitory complex with ATP2A2.

The protein localises to the sarcoplasmic reticulum membrane. It is found in the endoplasmic reticulum membrane. Reversibly inhibits the activity of ATP2A1/SERCA1 and ATP2A2/SERCA2 in sarcoplasmic reticulum by decreasing the apparent affinity of the ATPase for Ca(2+). Also inhibits the activity of ATP2A3/SERCA3. Modulates calcium re-uptake during muscle relaxation and plays an important role in calcium homeostasis in muscle. Required for muscle-based, non-shivering thermogenesis. The sequence is that of Sarcolipin from Homo sapiens (Human).